The chain runs to 314 residues: Testis-specific Y-encoded protein 4 (314 aa).

Belongs to the nucleosome assembly protein (NAP) family.

It localises to the cytoplasm. Its subcellular location is the nucleus. Its function is as follows. May be involved in sperm differentiation and proliferation. This Homo sapiens (Human) protein is Testis-specific Y-encoded protein 4 (TSPY4).